Reading from the N-terminus, the 533-residue chain is Glucose-6-phosphate isomerase (533 aa).

The active-site Proton donor is E330. Residues H359 and K461 contribute to the active site.

It belongs to the GPI family.

It is found in the cytoplasm. The catalysed reaction is alpha-D-glucose 6-phosphate = beta-D-fructose 6-phosphate. It functions in the pathway carbohydrate biosynthesis; gluconeogenesis. It participates in carbohydrate degradation; glycolysis; D-glyceraldehyde 3-phosphate and glycerone phosphate from D-glucose: step 2/4. Catalyzes the reversible isomerization of glucose-6-phosphate to fructose-6-phosphate. The protein is Glucose-6-phosphate isomerase of Prochlorococcus marinus (strain SARG / CCMP1375 / SS120).